Here is a 288-residue protein sequence, read N- to C-terminus: Acetyl-coenzyme A carboxylase carboxyl transferase subunit beta (288 aa).

The CoA carboxyltransferase N-terminal domain maps to 30–288 (IMTKCPKCKK…KMHQEVKTNA (259 aa)). Residues C34, C37, C53, and C56 each coordinate Zn(2+). A C4-type zinc finger spans residues 34-56 (CPKCKKIMYTKELAENLNVCFNC).

The protein belongs to the AccD/PCCB family. Acetyl-CoA carboxylase is a heterohexamer composed of biotin carboxyl carrier protein (AccB), biotin carboxylase (AccC) and two subunits each of ACCase subunit alpha (AccA) and ACCase subunit beta (AccD). The cofactor is Zn(2+).

It is found in the cytoplasm. The catalysed reaction is N(6)-carboxybiotinyl-L-lysyl-[protein] + acetyl-CoA = N(6)-biotinyl-L-lysyl-[protein] + malonyl-CoA. The protein operates within lipid metabolism; malonyl-CoA biosynthesis; malonyl-CoA from acetyl-CoA: step 1/1. Component of the acetyl coenzyme A carboxylase (ACC) complex. Biotin carboxylase (BC) catalyzes the carboxylation of biotin on its carrier protein (BCCP) and then the CO(2) group is transferred by the transcarboxylase to acetyl-CoA to form malonyl-CoA. This Staphylococcus saprophyticus subsp. saprophyticus (strain ATCC 15305 / DSM 20229 / NCIMB 8711 / NCTC 7292 / S-41) protein is Acetyl-coenzyme A carboxylase carboxyl transferase subunit beta.